The primary structure comprises 205 residues: Outer-membrane lipoprotein LolB (205 aa).

The signal sequence occupies residues Met1–Gly17. The N-palmitoyl cysteine moiety is linked to residue Cys18. The S-diacylglycerol cysteine moiety is linked to residue Cys18.

This sequence belongs to the LolB family. In terms of assembly, monomer.

The protein resides in the cell outer membrane. Plays a critical role in the incorporation of lipoproteins in the outer membrane after they are released by the LolA protein. The sequence is that of Outer-membrane lipoprotein LolB from Pseudomonas putida (strain ATCC 47054 / DSM 6125 / CFBP 8728 / NCIMB 11950 / KT2440).